Reading from the N-terminus, the 161-residue chain is Cyclic pyranopterin monophosphate synthase (161 aa).

Substrate contacts are provided by residues 75–77 (MCH) and 115–116 (ME). Aspartate 130 is an active-site residue.

It belongs to the MoaC family. In terms of assembly, homohexamer; trimer of dimers.

It catalyses the reaction (8S)-3',8-cyclo-7,8-dihydroguanosine 5'-triphosphate = cyclic pyranopterin phosphate + diphosphate. The protein operates within cofactor biosynthesis; molybdopterin biosynthesis. Its function is as follows. Catalyzes the conversion of (8S)-3',8-cyclo-7,8-dihydroguanosine 5'-triphosphate to cyclic pyranopterin monophosphate (cPMP). In Bacillus thuringiensis subsp. konkukian (strain 97-27), this protein is Cyclic pyranopterin monophosphate synthase.